Here is a 126-residue protein sequence, read N- to C-terminus: Small ribosomal subunit protein uS13 (126 aa).

The tract at residues 95–126 (NLPVHGQRTHTNARTRKGPRRAIAGKKKAGKK) is disordered.

It belongs to the universal ribosomal protein uS13 family. In terms of assembly, part of the 30S ribosomal subunit. Forms a loose heterodimer with protein S19. Forms two bridges to the 50S subunit in the 70S ribosome.

In terms of biological role, located at the top of the head of the 30S subunit, it contacts several helices of the 16S rRNA. In the 70S ribosome it contacts the 23S rRNA (bridge B1a) and protein L5 of the 50S subunit (bridge B1b), connecting the 2 subunits; these bridges are implicated in subunit movement. Contacts the tRNAs in the A and P-sites. This Frankia casuarinae (strain DSM 45818 / CECT 9043 / HFP020203 / CcI3) protein is Small ribosomal subunit protein uS13.